The chain runs to 513 residues: Serine/threonine-protein kinase PBL27 (513 aa).

Residues 1 to 61 (MSGCLPCFGS…KKELTAPKEG (61 aa)) form a disordered region. S-palmitoyl cysteine attachment occurs at residues Cys-4 and Cys-7. 2 stretches are compositionally biased toward basic and acidic residues: residues 15-27 (AASK…ELSA) and 38-57 (ISLD…ELTA). A Protein kinase domain is found at 83-360 (FRPECLLGEG…GDVVTALTYL (278 aa)). ATP contacts are provided by residues 89–97 (LGEGGFGRV) and Lys-112. Asp-210 acts as the Proton acceptor in catalysis. Ser-244 is modified (phosphoserine; by CERK1). A phosphothreonine; by CERK1 mark is found at Thr-245 and Thr-250. The segment covering 365 to 378 (FDPNAPSGQNSRSG) has biased composition (polar residues). The disordered stretch occupies residues 365–513 (FDPNAPSGQN…GPGSFDSTND (149 aa)). Phosphoserine occurs at positions 392 and 401. The span at 417 to 428 (NSPDYRRRDMVR) shows a compositional bias: basic and acidic residues. Gly residues predominate over residues 434–446 (SEGGSETGGGSGR). Positions 456–473 (QESQRGSPASVGRSSRGT) are enriched in polar residues. Positions 475–486 (RNRDLDRERAVA) are enriched in basic and acidic residues. Over residues 504 to 513 (GPGSFDSTND) the composition is skewed to polar residues.

Belongs to the protein kinase superfamily. Ser/Thr protein kinase family. In terms of assembly, interacts with CERK1 (preferentially unphosphorylated) at the plasma membrane. Binds to MAPKKK5 at the plasma membrane; disassociation is induced by chitin perception by the CERK1 complex. Also associates with MAPKKK3. Post-translationally, phosphorylated by CERK1 upon elicitation by chitin. In terms of processing, palmitoylation at Cys-4 and Cys-7 are required for plasma membrane location.

It is found in the cell membrane. The enzyme catalyses L-seryl-[protein] + ATP = O-phospho-L-seryl-[protein] + ADP + H(+). The catalysed reaction is L-threonyl-[protein] + ATP = O-phospho-L-threonyl-[protein] + ADP + H(+). Receptor-like cytoplasmic kinase involved in the transduction of signal between the host cell surface chitin receptor complex CERK1-LYK5 and the intracellular MAPKKK5-dependent mitogen-activated protein kinase (MAPK) cascade that leads to chitin-induced immunity. Phosphorylates and activates MAPKKK5 when phosphorylated by CERK1 after elicitation by chitin. This Arabidopsis thaliana (Mouse-ear cress) protein is Serine/threonine-protein kinase PBL27.